The sequence spans 273 residues: Homeobox protein Nkx-2.2 (273 aa).

Disordered regions lie at residues 1–56 (MSLT…LDAV) and 90–131 (LAAG…KRKR). Over residues 20-38 (DTNDEEGSVAEGPEEENEG) the composition is skewed to acidic residues. Positions 128-187 (KRKRRVLFSKAQTYELERRFRQQRYLSAPEREHLASLIRLTPTQVKIWFQNHRYKMKRAR) form a DNA-binding region, homeobox.

The protein belongs to the NK-2 homeobox family. In terms of assembly, interacts with OLIG2.

The protein localises to the nucleus. Transcriptional activator involved in the development of insulin-producting beta cells in the endocrine pancreas. May also be involved in specifying diencephalic neuromeric boundaries, and in controlling the expression of genes that play a role in axonal guidance. Binds to elements within the NEUROD1 promoter. The chain is Homeobox protein Nkx-2.2 (NKX2-2) from Homo sapiens (Human).